We begin with the raw amino-acid sequence, 79 residues long: Small ribosomal subunit protein bS18 (79 aa).

Belongs to the bacterial ribosomal protein bS18 family. In terms of assembly, part of the 30S ribosomal subunit. Forms a tight heterodimer with protein bS6.

Binds as a heterodimer with protein bS6 to the central domain of the 16S rRNA, where it helps stabilize the platform of the 30S subunit. In Streptococcus agalactiae serotype Ia (strain ATCC 27591 / A909 / CDC SS700), this protein is Small ribosomal subunit protein bS18.